The primary structure comprises 131 residues: Lymphocyte antigen 6C2 (131 aa).

Positions 1 to 26 are cleaved as a signal peptide; the sequence is MDSTHATKSCLLILLVALLCAGRAQG. One can recognise a UPAR/Ly6 domain in the interval 27-116; the sequence is LQCYECYGVP…TAGSTWTMAG (90 aa). 5 disulfide bridges follow: Cys-29–Cys-53, Cys-32–Cys-41, Cys-46–Cys-74, Cys-78–Cys-95, and Cys-96–Cys-101. Gly-109 carries GPI-anchor amidated glycine lipidation. Positions 110 to 131 are cleaved as a propeptide — removed in mature form; sequence STWTMAGVLLFSLSSVILQTLL.

The protein localises to the cell membrane. This is Lymphocyte antigen 6C2 (Ly6c2) from Mus musculus (Mouse).